Reading from the N-terminus, the 62-residue chain is Prokaryotic ubiquitin-like protein Pup (62 aa).

The interval 1–29 (MSQQSLNAPGPGAEDGNDPEAVTGGQTFA) is disordered. Residues 21–56 (AVTGGQTFASAQAADDLLDEIDSVLESNAETFVRSF) are ARC ATPase binding. Glutamine 62 is subject to Deamidated glutamine. Residue glutamine 62 forms an Isoglutamyl lysine isopeptide (Gln-Lys) (interchain with K-? in acceptor proteins) linkage.

It belongs to the prokaryotic ubiquitin-like protein family. In terms of assembly, strongly interacts with the proteasome-associated ATPase ARC through a hydrophobic interface; the interacting region of Pup lies in its C-terminal half. There is one Pup binding site per ARC hexamer ring. In terms of processing, is modified by deamidation of its C-terminal glutamine to glutamate by the deamidase Dop, a prerequisite to the subsequent pupylation process.

The protein operates within protein degradation; proteasomal Pup-dependent pathway. Protein modifier that is covalently attached to lysine residues of substrate proteins, thereby targeting them for proteasomal degradation. The tagging system is termed pupylation. The chain is Prokaryotic ubiquitin-like protein Pup from Brachybacterium faecium (strain ATCC 43885 / DSM 4810 / JCM 11609 / LMG 19847 / NBRC 14762 / NCIMB 9860 / 6-10).